The primary structure comprises 302 residues: Proline dehydrogenase 1 (302 aa).

K95 is a substrate binding site. D129 is a catalytic residue. Positions 130 and 158 each coordinate FAD. The active site involves R179. FAD contacts are provided by residues K182 to A184 and T221 to H222. R283 to R284 serves as a coordination point for substrate.

This sequence belongs to the proline oxidase family. Requires FAD as cofactor.

The catalysed reaction is L-proline + a quinone = (S)-1-pyrroline-5-carboxylate + a quinol + H(+). Its pathway is amino-acid degradation; L-proline degradation into L-glutamate; L-glutamate from L-proline: step 1/2. In terms of biological role, converts proline to delta-1-pyrroline-5-carboxylate. This chain is Proline dehydrogenase 1 (fadM), found in Bacillus subtilis subsp. natto.